We begin with the raw amino-acid sequence, 216 residues long: UPF0711 protein C18orf21 homolog (216 aa).

2 disordered regions span residues 118-185 (RSFL…ASKT) and 197-216 (SQSE…LSSL). Positions 124–136 (LKSNPTTPTSKLS) are enriched in polar residues. The residue at position 126 (Ser-126) is a Phosphoserine. Phosphothreonine occurs at positions 130 and 139. Composition is skewed to polar residues over residues 145–157 (PSSA…SGSK) and 167–182 (TPTS…SKNA). Over residues 200-209 (ESKKNPKMDF) the composition is skewed to basic and acidic residues.

This sequence belongs to the UPF0711 family.

This Bos taurus (Bovine) protein is UPF0711 protein C18orf21 homolog.